The primary structure comprises 390 residues: Flagellar P-ring protein (390 aa).

The N-terminal stretch at 1-36 (MFFSRKIRSLLLTPKRRWSLILTLCLIFTGINFSTS) is a signal peptide.

Belongs to the FlgI family. The basal body constitutes a major portion of the flagellar organelle and consists of four rings (L,P,S, and M) mounted on a central rod.

The protein resides in the periplasm. Its subcellular location is the bacterial flagellum basal body. Functionally, assembles around the rod to form the L-ring and probably protects the motor/basal body from shearing forces during rotation. The sequence is that of Flagellar P-ring protein from Desulfotalea psychrophila (strain LSv54 / DSM 12343).